We begin with the raw amino-acid sequence, 275 residues long: Exosome complex component Rrp42 (275 aa).

It belongs to the RNase PH family. Rrp42 subfamily. In terms of assembly, component of the archaeal exosome complex. Forms a hexameric ring-like arrangement composed of 3 Rrp41-Rrp42 heterodimers. The hexameric ring associates with a trimer of Rrp4 and/or Csl4 subunits.

The protein localises to the cytoplasm. Functionally, non-catalytic component of the exosome, which is a complex involved in RNA degradation. Contributes to the structuring of the Rrp41 active site. The polypeptide is Exosome complex component Rrp42 (Saccharolobus islandicus (strain Y.N.15.51 / Yellowstone #2) (Sulfolobus islandicus)).